Consider the following 272-residue polypeptide: Bis(5'-nucleosyl)-tetraphosphatase, symmetrical (272 aa).

It belongs to the Ap4A hydrolase family.

The enzyme catalyses P(1),P(4)-bis(5'-adenosyl) tetraphosphate + H2O = 2 ADP + 2 H(+). Functionally, hydrolyzes diadenosine 5',5'''-P1,P4-tetraphosphate to yield ADP. In Glaesserella parasuis serovar 5 (strain SH0165) (Haemophilus parasuis), this protein is Bis(5'-nucleosyl)-tetraphosphatase, symmetrical.